The primary structure comprises 674 residues: DNA ligase (674 aa).

NAD(+) is bound by residues 35-39 (DAEYD), 84-85 (SL), and glutamate 116. Lysine 118 acts as the N6-AMP-lysine intermediate in catalysis. 4 residues coordinate NAD(+): arginine 139, glutamate 176, lysine 293, and lysine 317. Zn(2+) contacts are provided by cysteine 411, cysteine 414, cysteine 429, and cysteine 435. Positions 593–674 (DGVKPLEGTT…LLALLEEHGV (82 aa)) constitute a BRCT domain.

The protein belongs to the NAD-dependent DNA ligase family. LigA subfamily. It depends on Mg(2+) as a cofactor. Mn(2+) is required as a cofactor.

The catalysed reaction is NAD(+) + (deoxyribonucleotide)n-3'-hydroxyl + 5'-phospho-(deoxyribonucleotide)m = (deoxyribonucleotide)n+m + AMP + beta-nicotinamide D-nucleotide.. DNA ligase that catalyzes the formation of phosphodiester linkages between 5'-phosphoryl and 3'-hydroxyl groups in double-stranded DNA using NAD as a coenzyme and as the energy source for the reaction. It is essential for DNA replication and repair of damaged DNA. This chain is DNA ligase, found in Saccharophagus degradans (strain 2-40 / ATCC 43961 / DSM 17024).